Consider the following 290-residue polypeptide: MCSITSILGLIGRNVNYSYSPFIHNTAAEMLRLPFYYTIFNIADARQIPDALNGMRALGIAGLNVTIPYKQVVTEYVDTLSAEAQAVGAVNTIVNNNGRLSGCNTDIAGVSHPLKPYKERLHQSPAGIFGNGGAALAAVEALRRDYHPSAIRLFVRDPDKGLALAEQVHAKHPEAPIEIFKIDAYDAIRDCHLLINATPIGTKGVQTAGNSALLPQEQKLLHDGQIIFDMVYNPLRTPFVNMAAEAGAVVIPGVEMLIAQAAESFCLWTGETMPVDSIREKILKKLTAQP.

Residues 18-20 (SYS) and T66 each bind shikimate. K70 (proton acceptor) is an active-site residue. Shikimate is bound by residues N91 and D106. NADP(+) contacts are provided by residues 130 to 134 (GNGGA) and M230. A shikimate-binding site is contributed by Y232. Residue G253 participates in NADP(+) binding.

Belongs to the shikimate dehydrogenase family. As to quaternary structure, homodimer.

It carries out the reaction shikimate + NADP(+) = 3-dehydroshikimate + NADPH + H(+). The protein operates within metabolic intermediate biosynthesis; chorismate biosynthesis; chorismate from D-erythrose 4-phosphate and phosphoenolpyruvate: step 4/7. In terms of biological role, involved in the biosynthesis of the chorismate, which leads to the biosynthesis of aromatic amino acids. Catalyzes the reversible NADPH linked reduction of 3-dehydroshikimate (DHSA) to yield shikimate (SA). The protein is Shikimate dehydrogenase (NADP(+)) of Prosthecochloris aestuarii (strain DSM 271 / SK 413).